The following is a 277-amino-acid chain: Phosphatidylglycerol--prolipoprotein diacylglyceryl transferase (277 aa).

The next 4 helical transmembrane spans lie at 22–42, 59–79, 107–127, and 133–153; these read ISIR…YIVV, LFFY…CLFY, GYEG…LWLY, and MNYM…ACFI. Position 154 (R154) interacts with a 1,2-diacyl-sn-glycero-3-phospho-(1'-sn-glycerol). 3 helical membrane-spanning segments follow: residues 186–206, 216–236, and 251–271; these read PAQL…MFLY, GFFF…VEFL, and MGQW…FFYG.

The protein belongs to the Lgt family.

Its subcellular location is the cell inner membrane. The catalysed reaction is L-cysteinyl-[prolipoprotein] + a 1,2-diacyl-sn-glycero-3-phospho-(1'-sn-glycerol) = an S-1,2-diacyl-sn-glyceryl-L-cysteinyl-[prolipoprotein] + sn-glycerol 1-phosphate + H(+). It participates in protein modification; lipoprotein biosynthesis (diacylglyceryl transfer). Its function is as follows. Catalyzes the transfer of the diacylglyceryl group from phosphatidylglycerol to the sulfhydryl group of the N-terminal cysteine of a prolipoprotein, the first step in the formation of mature lipoproteins. The polypeptide is Phosphatidylglycerol--prolipoprotein diacylglyceryl transferase (Bacteroides fragilis (strain ATCC 25285 / DSM 2151 / CCUG 4856 / JCM 11019 / LMG 10263 / NCTC 9343 / Onslow / VPI 2553 / EN-2)).